Consider the following 3003-residue polypeptide: MAX gene-associated protein (3003 aa).

Glycyl lysine isopeptide (Lys-Gly) (interchain with G-Cter in SUMO2) cross-links involve residues Lys-4 and Lys-178. A DNA-binding region (T-box) is located at residues 84 to 260; sequence MWNEFHNRST…YNPFAKGFRD (177 aa). Basic and acidic residues predominate over residues 259-277; that stretch reads RDDGLSSKPQREGKQRNSS. Residues 259-290 are disordered; it reads RDDGLSSKPQREGKQRNSSDQEGNSVSSSPAH. Polar residues predominate over residues 278–288; the sequence is DQEGNSVSSSP. Glycyl lysine isopeptide (Lys-Gly) (interchain with G-Cter in SUMO2) cross-links involve residues Lys-323, Lys-329, Lys-348, Lys-431, Lys-458, Lys-463, and Lys-480. At Ser-531 the chain carries Phosphoserine. Residues 553 to 647 are disordered; the sequence is ILDNSSTERI…NIPVGPGSTF (95 aa). Lys-567 participates in a covalent cross-link: Glycyl lysine isopeptide (Lys-Gly) (interchain with G-Cter in SUMO2). The segment covering 595–607 has biased composition (polar residues); that stretch reads KTVTASHSASPNT. Ser-604 carries the post-translational modification Phosphoserine. Residues Lys-610, Lys-651, Lys-782, Lys-788, Lys-814, and Lys-823 each participate in a glycyl lysine isopeptide (Lys-Gly) (interchain with G-Cter in SUMO2) cross-link. Over residues 610-621 the composition is skewed to basic residues; sequence KRGRPRKLRLSK. Ser-848 bears the Phosphoserine mark. The segment covering 871–913 has biased composition (polar residues); it reads KQSTISPSTSHSVKPQSVTTASRKTKAQNKQTTLSGRTKSSYK. Disordered stretches follow at residues 871-946 and 967-987; these read KQST…TSDN and LRQA…GLSK. Ser-921 carries the post-translational modification Phosphoserine. Residue Lys-925 forms a Glycyl lysine isopeptide (Lys-Gly) (interchain with G-Cter in SUMO2) linkage. A compositionally biased stretch (polar residues) spans 937–946; that stretch reads KNSLSSTSDN. A compositionally biased stretch (low complexity) spans 969–978; sequence QAQQQHLQQQ. Residues Lys-987 and Lys-1088 each participate in a glycyl lysine isopeptide (Lys-Gly) (interchain with G-Cter in SUMO2) cross-link. The disordered stretch occupies residues 1111-1130; that stretch reads LGEEGREGGGVREDEEQLKE. The segment covering 1113-1122 has biased composition (basic and acidic residues); that stretch reads EEGREGGGVR. Glycyl lysine isopeptide (Lys-Gly) (interchain with G-Cter in SUMO2) cross-links involve residues Lys-1136, Lys-1158, Lys-1194, and Lys-1202. 4 disordered regions span residues 1186 to 1215, 1246 to 1277, 1297 to 1323, and 1376 to 1424; these read QPDL…NPVI, QRQL…TKEL, SQEK…RSPG, and RGEK…DISP. Composition is skewed to low complexity over residues 1248–1269 and 1303–1315; these read QLSP…YSSP and KSSC…SSTS. A phosphoserine mark is found at Ser-1423 and Ser-1450. Residues Lys-1454 and Lys-1495 each participate in a glycyl lysine isopeptide (Lys-Gly) (interchain with G-Cter in SUMO2) cross-link. Disordered stretches follow at residues 1476–1508, 1722–1746, 1856–1885, 1920–1954, 1964–1983, and 1988–2038; these read AKVA…RSGK, PPVS…SNNV, ISPP…PVGT, IKKE…KALD, SGII…GGDL, and TLRE…AGSK. 3 stretches are compositionally biased toward polar residues: residues 1488–1507, 1735–1746, and 1859–1880; these read LPST…NRSG, PVTTPQISSNNV, and PETQ…STGG. Residues Lys-1937 and Lys-1944 each participate in a glycyl lysine isopeptide (Lys-Gly) (interchain with G-Cter in SUMO2) cross-link. Polar residues predominate over residues 1964–1976; sequence SGIIASENTSNNS. Glycyl lysine isopeptide (Lys-Gly) (interchain with G-Cter in SUMO2) cross-links involve residues Lys-2060 and Lys-2084. The disordered stretch occupies residues 2087–2110; the sequence is LSGNQVKEQQSNSQAEAKKDCEDS. Positions 2088–2101 are enriched in polar residues; the sequence is SGNQVKEQQSNSQA. Residues Lys-2104, Lys-2152, and Lys-2179 each participate in a glycyl lysine isopeptide (Lys-Gly) (interchain with G-Cter in SUMO2) cross-link. Position 2206 is an omega-N-methylarginine (Arg-2206). Residues 2207 to 2255 form a disordered region; the sequence is GSRHFQGHLLLPREQMKPKQQTKDGRSSAADFTVLDLEDEDEEDEKTDD. The span at 2220–2232 shows a compositional bias: basic and acidic residues; sequence EQMKPKQQTKDGR. Residue Lys-2225 forms a Glycyl lysine isopeptide (Lys-Gly) (interchain with G-Cter in SUMO2) linkage. A compositionally biased stretch (acidic residues) spans 2242–2255; it reads DLEDEDEEDEKTDD. Glycyl lysine isopeptide (Lys-Gly) (interchain with G-Cter in SUMO2) cross-links involve residues Lys-2317, Lys-2352, Lys-2396, and Lys-2471. The region spanning 2362–2413 is the bHLH domain; it reads YYRRTHTANERRRRGEMRDLFEKLKITLGLLHSSKVSKSLILNRAFSEIQGL. Ser-2480 carries the phosphoserine modification. Positions 2515-2534 are disordered; that stretch reads KRDQATENASPSDTPHSSAN. The segment covering 2520 to 2534 has biased composition (polar residues); the sequence is TENASPSDTPHSSAN. Residues Lys-2568 and Lys-2618 each participate in a glycyl lysine isopeptide (Lys-Gly) (interchain with G-Cter in SUMO2) cross-link. A compositionally biased stretch (basic and acidic residues) spans 2629 to 2651; sequence SEASSLKDTERISSRGNHRDSRK. The interval 2629–2654 is disordered; the sequence is SEASSLKDTERISSRGNHRDSRKALG. Residue Lys-2724 forms a Glycyl lysine isopeptide (Lys-Gly) (interchain with G-Cter in SUMO2) linkage. Residues Ser-2849 and Ser-2860 each carry the phosphoserine modification. The disordered stretch occupies residues 2877 to 2917; it reads LVSHRKSSDGGQSTSGLPAEPESVSSPPILHMKTGPENSNT. Lys-2979 participates in a covalent cross-link: Glycyl lysine isopeptide (Lys-Gly) (interchain with G-Cter in SUMO2).

In terms of assembly, component of some MLL1/MLL complex, at least composed of the core components KMT2A/MLL1, ASH2L, HCFC1/HCF1, WDR5 and RBBP5, as well as the facultative components BACC1, CHD8, E2F6, HSP70, INO80C, KANSL1, LAS1L, MAX, MCRS1, MGA, MYST1/MOF, PELP1, PHF20, PRP31, RING2, RUVB1/TIP49A, RUVB2/TIP49B, SENP3, TAF1, TAF4, TAF6, TAF7, TAF9 and TEX10. Interacts with ZMYND11. Interacts with MAX. Requires heterodimerization with MAX for E-box binding. In terms of tissue distribution, highly expressed in germ cells and granulosa cells.

The protein localises to the nucleus. Functionally, functions as a dual-specificity transcription factor, regulating the expression of both MAX-network and T-box family target genes. Functions as a repressor or an activator. Binds to 5'-AATTTCACACCTAGGTGTGAAATT-3' core sequence and seems to regulate MYC-MAX target genes. Suppresses transcriptional activation by MYC and inhibits MYC-dependent cell transformation. Function activated by heterodimerization with MAX. This heterodimerization serves the dual function of both generating an E-box-binding heterodimer and simultaneously blocking interaction of a corepressor. This is MAX gene-associated protein from Mus musculus (Mouse).